The following is a 216-amino-acid chain: MLHGIGMTSQRTRARMIERLREKGIRNEAVLKAMAAVPRHVFVEEALASRAYEDTALPLGMGQTISQPFVVARMIELLLNGRSSLGKTLEVGAGCGYQAAVLAQLTKDVYAVERLGPLLEKAKANMRILQQFNVRLKHADGQLGLPEAGPFDSIIVAAAGSHVPPALLEQLAPGGRLVLPVGAGEQYLSFIEHTPQGYVETRLDAVRFVPLLSGTQ.

Ser-66 is an active-site residue.

Belongs to the methyltransferase superfamily. L-isoaspartyl/D-aspartyl protein methyltransferase family.

It localises to the cytoplasm. The catalysed reaction is [protein]-L-isoaspartate + S-adenosyl-L-methionine = [protein]-L-isoaspartate alpha-methyl ester + S-adenosyl-L-homocysteine. Functionally, catalyzes the methyl esterification of L-isoaspartyl residues in peptides and proteins that result from spontaneous decomposition of normal L-aspartyl and L-asparaginyl residues. It plays a role in the repair and/or degradation of damaged proteins. The polypeptide is Protein-L-isoaspartate O-methyltransferase (Dechloromonas aromatica (strain RCB)).